A 21-amino-acid polypeptide reads, in one-letter code: Fibrinogen beta chain (21 aa).

Glutamine 1 bears the Pyrrolidone carboxylic acid mark. The segment covering 1-11 has biased composition (acidic residues); it reads QHSTDYDEVED. Positions 1-21 are disordered; sequence QHSTDYDEVEDDRAKLHLDAR. Threonine 4 carries O-linked (GalNAc...) threonine glycosylation. Tyrosine 6 is modified (sulfotyrosine). The span at 12-21 shows a compositional bias: basic and acidic residues; the sequence is DRAKLHLDAR.

Heterohexamer; disulfide linked. Contains 2 sets of 3 non-identical chains (alpha, beta and gamma). The 2 heterotrimers are in head to head conformation with the N-termini in a small central domain. In terms of processing, conversion of fibrinogen to fibrin is triggered by thrombin, which cleaves fibrinopeptides A and B from alpha and beta chains, and thus exposes the N-terminal polymerization sites responsible for the formation of the soft clot.

Its subcellular location is the secreted. Functionally, cleaved by the protease thrombin to yield monomers which, together with fibrinogen alpha (FGA) and fibrinogen gamma (FGG), polymerize to form an insoluble fibrin matrix. Fibrin has a major function in hemostasis as one of the primary components of blood clots. In addition, functions during the early stages of wound repair to stabilize the lesion and guide cell migration during re-epithelialization. Was originally thought to be essential for platelet aggregation, based on in vitro studies using anticoagulated blood. However subsequent studies have shown that it is not absolutely required for thrombus formation in vivo. Enhances expression of SELP in activated platelets. Maternal fibrinogen is essential for successful pregnancy. Fibrin deposition is also associated with infection, where it protects against IFNG-mediated hemorrhage. May also facilitate the antibacterial immune response via both innate and T-cell mediated pathways. The polypeptide is Fibrinogen beta chain (FGB) (Muntiacus muntjak (Barking deer)).